A 143-amino-acid chain; its full sequence is UPF0225 protein Reut_A0143 (143 aa).

The protein belongs to the UPF0225 family.

The sequence is that of UPF0225 protein Reut_A0143 from Cupriavidus pinatubonensis (strain JMP 134 / LMG 1197) (Cupriavidus necator (strain JMP 134)).